A 207-amino-acid polypeptide reads, in one-letter code: MNPSRIRIKMCGMTRSEDIQCAIDLGVDAIGLIFYPKSARNVSLEKARIIVNNIPPFVDIVAVLVNPEQSFVQLIINEIPVQLLQFHGEESSEFCRQFNKPFIKAIHPKTAIQIQSAVDEFFDASAILLDTPSDKERGGTGLTFDWNIIPENLSKPYILAGGLNESNILEAITMCHPYAVDVCSGIEASPGVKDHLKMSRFIKAIWG.

The protein belongs to the TrpF family.

It carries out the reaction N-(5-phospho-beta-D-ribosyl)anthranilate = 1-(2-carboxyphenylamino)-1-deoxy-D-ribulose 5-phosphate. Its pathway is amino-acid biosynthesis; L-tryptophan biosynthesis; L-tryptophan from chorismate: step 3/5. The protein is N-(5'-phosphoribosyl)anthranilate isomerase of Legionella pneumophila (strain Corby).